A 156-amino-acid polypeptide reads, in one-letter code: Putative HTH-type transcriptional regulator YwgB (156 aa).

Residues 2–133 enclose the HTH rrf2-type domain; that stretch reads KMKSGMEQAV…REESLQHVMD (132 aa).

The chain is Putative HTH-type transcriptional regulator YwgB (ywgB) from Bacillus subtilis (strain 168).